A 735-amino-acid chain; its full sequence is E3 UFM1-protein ligase 1 homolog (735 aa).

Positions 389–445 (RLEAEKKKQGGAKAAVKVQEETDDWGDGKKGGKGGKKNAKSVKGGSKSSAPSTSSNL) are disordered. Basic residues predominate over residues 419–428 (GGKGGKKNAK). Low complexity predominate over residues 429–445 (SVKGGSKSSAPSTSSNL).

Belongs to the UFL1 family.

In terms of biological role, E3 UFM1-protein ligase that mediates ufmylation of target proteins. This chain is E3 UFM1-protein ligase 1 homolog (ufl-1), found in Caenorhabditis elegans.